Here is a 474-residue protein sequence, read N- to C-terminus: Glutamate--tRNA ligase (474 aa).

The short motif at 9–19 (PSPTGYLHVGG) is the 'HIGH' region element. Positions 240 to 244 (KLSKR) match the 'KMSKS' region motif. Residue Lys243 participates in ATP binding.

Belongs to the class-I aminoacyl-tRNA synthetase family. Glutamate--tRNA ligase type 1 subfamily. As to quaternary structure, monomer.

It is found in the cytoplasm. The enzyme catalyses tRNA(Glu) + L-glutamate + ATP = L-glutamyl-tRNA(Glu) + AMP + diphosphate. Catalyzes the attachment of glutamate to tRNA(Glu) in a two-step reaction: glutamate is first activated by ATP to form Glu-AMP and then transferred to the acceptor end of tRNA(Glu). In Aliivibrio salmonicida (strain LFI1238) (Vibrio salmonicida (strain LFI1238)), this protein is Glutamate--tRNA ligase.